Consider the following 792-residue polypeptide: Starch synthase 2, chloroplastic/amyloplastic (792 aa).

Residues 1-55 constitute a chloroplast transit peptide; sequence MASVAESSFPLLCQIKTQRRINSSTLRHSRVSYHDLPSGSLSFRSRSFVLGHRCK. Residues 105–295 form a disordered region; that stretch reads IKESTPDLDD…GKDEEKPPPL (191 aa). Positions 145-156 are enriched in polar residues; the sequence is GSVSPSTYGKSS. Residues 179 to 192 are compositionally biased toward low complexity; it reads SSASVISSSPVTSP. The segment covering 221–233 has biased composition (polar residues); that stretch reads SVMTSPEKTSDPV. Residues 266 to 275 are compositionally biased toward basic and acidic residues; the sequence is KTEKYVEKTP. Lys315 lines the ADP-alpha-D-glucose pocket.

The protein belongs to the glycosyltransferase 1 family. Bacterial/plant glycogen synthase subfamily. Expressed in roots, leaves and flowers.

The protein localises to the plastid. It is found in the chloroplast. It localises to the amyloplast. It catalyses the reaction [(1-&gt;4)-alpha-D-glucosyl](n) + ADP-alpha-D-glucose = [(1-&gt;4)-alpha-D-glucosyl](n+1) + ADP + H(+). Its pathway is glycan biosynthesis; starch biosynthesis. In terms of biological role, involved in the synthesis of glycan chains within amylopectin in leaves. Is required to produce chains with a degree of polymerization of 12 to 25 (DP12-DP25). The chain is Starch synthase 2, chloroplastic/amyloplastic (SS2) from Arabidopsis thaliana (Mouse-ear cress).